The following is a 563-amino-acid chain: Rhotekin (563 aa).

Arg14 carries the omega-N-methylarginine modification. Positions 17-98 constitute an REM-1 domain; it reads ALEMEFKRGR…LQRRKEAQVL (82 aa). Phosphoserine is present on residues Ser30 and Ser106. The tract at residues 96–116 is disordered; that stretch reads QVLGKTSRRPSDSGPPAERSP. Arg230 carries the post-translational modification Asymmetric dimethylarginine. A Phosphoserine modification is found at Ser232. Positions 309–416 constitute a PH domain; the sequence is QPTASGTLRV…WMEALWQLFF (108 aa). The disordered stretch occupies residues 518–563; sequence TFSLDAVPPDHSPRARSVAPLPPQRSPRTRGLCSKGQPRTWLQSPV. 3 positions are modified to phosphoserine: Ser520, Ser529, and Ser543.

Interacts via its C-terminal region with the TAX1BP3 PDZ domain. This interaction facilitates Rho-mediated activation of the c-Fos serum response element (SRE). Interacts with SEPT9. Specifically binds to GTP-bound RHOA, RHOB and RHOC and inhibits their GTPase activity. In terms of tissue distribution, highly expressed in prostate, moderately in kidney, heart, brain, spleen, testis, placenta, small intestine, pancreas, skeletal muscle and peripheral blood leukocytes, and weakly in ovary, colon and thymus. Weakly expressed in all normal cell lines tested. Overexpressed in various cancer cell lines.

Functionally, mediates Rho signaling to activate NF-kappa-B and may confer increased resistance to apoptosis to cells in gastric tumorigenesis. May play a novel role in the organization of septin structures. The chain is Rhotekin from Homo sapiens (Human).